Here is a 333-residue protein sequence, read N- to C-terminus: tRNA (guanine(37)-N(1))/4-demethylwyosine(37)-methyltransferase Taw22 (333 aa).

S-adenosyl-L-methionine-binding positions include Arg174, Phe191, 213–214, and 243–244; these read EI and DV.

This sequence belongs to the class I-like SAM-binding methyltransferase superfamily. TRM5/TYW2 family.

The protein resides in the cytoplasm. The enzyme catalyses guanosine(37) in tRNA + S-adenosyl-L-methionine = N(1)-methylguanosine(37) in tRNA + S-adenosyl-L-homocysteine + H(+). The catalysed reaction is 4-demethylwyosine(37) in tRNA(Phe) + S-adenosyl-L-methionine = isowyosine(37) in tRNA(Phe) + S-adenosyl-L-homocysteine + H(+). Functionally, catalyzes both the N1-methylation of guanosine and the C7-methylation of 4-demethylwyosine (imG-14) at position 37 in tRNA(Phe). The chain is tRNA (guanine(37)-N(1))/4-demethylwyosine(37)-methyltransferase Taw22 from Pyrococcus abyssi (strain GE5 / Orsay).